The following is a 473-amino-acid chain: MSMKIGAKAFKERIGEGLEDTVMRGAVSSAQERLYERRLSASEELGNWEKWRELGEEIRQHTLAHLDDYLYQLSESVSARGGHVFFAKTKEEASAYIQHVAQKKEAKKIVKSKSMVTEEIEMNQALEEIGCEVVESDLGEYILQVDDHEPPSHIVAPALHMTKEQIREVFHEKLGYEMSETPEDMTSFVRAILREKFLEADMGVTGCNFAVANTGSICLVTNEGNADLVTAIPKTHIAVMGMERMVPTMEELDVLVGLLCRSAVGQKLTSYISVVGPKGEEEVDGPEEFHLVIVDNGRSNILGTAFQPVLQCIRCAACINVCPVYRHVGGHSYGSIYPGPIGAVLSPLLGGYDDYQELPFASSLCAACTDACPVKIPLHELLIKHRQVIVEKEGRAPKAEMMAMKMFGMGASTPGMYQFGTKAAPLLMNRMASNGQISKGIGPLKNWTDIRDLPAPSKERFRDWFKKRQKEEQ.

4Fe-4S ferredoxin-type domains lie at 303 to 333 and 352 to 381; these read GTAF…GHSY and YDDY…LHEL. Residues Cys312, Cys315, Cys318, Cys322, Cys365, Cys368, and Cys372 each contribute to the [4Fe-4S] cluster site.

Belongs to the LutB/YkgF family.

Its function is as follows. Is involved in L-lactate degradation and allows cells to grow with lactate as the sole carbon source. Has probably a role as an electron transporter during oxidation of L-lactate. In Bacillus pumilus (strain SAFR-032), this protein is Lactate utilization protein B.